The chain runs to 357 residues: 3-isopropylmalate dehydrogenase (357 aa).

Position 77–90 (77–90 (GPKWDNLEGSKRPE)) interacts with NAD(+). Positions 97, 107, 136, and 224 each coordinate substrate. Mg(2+)-binding residues include Asp224, Asp248, and Asp252. 282-294 (GSAPDIAGLDIAN) lines the NAD(+) pocket.

This sequence belongs to the isocitrate and isopropylmalate dehydrogenases family. LeuB type 1 subfamily. As to quaternary structure, homodimer. It depends on Mg(2+) as a cofactor. Mn(2+) is required as a cofactor.

The protein resides in the cytoplasm. It carries out the reaction (2R,3S)-3-isopropylmalate + NAD(+) = 4-methyl-2-oxopentanoate + CO2 + NADH. It functions in the pathway amino-acid biosynthesis; L-leucine biosynthesis; L-leucine from 3-methyl-2-oxobutanoate: step 3/4. Its function is as follows. Catalyzes the oxidation of 3-carboxy-2-hydroxy-4-methylpentanoate (3-isopropylmalate) to 3-carboxy-4-methyl-2-oxopentanoate. The product decarboxylates to 4-methyl-2 oxopentanoate. The polypeptide is 3-isopropylmalate dehydrogenase (leuB) (Clostridium pasteurianum).